We begin with the raw amino-acid sequence, 351 residues long: Histidinol-phosphate aminotransferase (351 aa).

Lysine 209 is subject to N6-(pyridoxal phosphate)lysine.

This sequence belongs to the class-II pyridoxal-phosphate-dependent aminotransferase family. Histidinol-phosphate aminotransferase subfamily. In terms of assembly, homodimer. It depends on pyridoxal 5'-phosphate as a cofactor.

The catalysed reaction is L-histidinol phosphate + 2-oxoglutarate = 3-(imidazol-4-yl)-2-oxopropyl phosphate + L-glutamate. Its pathway is amino-acid biosynthesis; L-histidine biosynthesis; L-histidine from 5-phospho-alpha-D-ribose 1-diphosphate: step 7/9. This is Histidinol-phosphate aminotransferase from Chromohalobacter salexigens (strain ATCC BAA-138 / DSM 3043 / CIP 106854 / NCIMB 13768 / 1H11).